Reading from the N-terminus, the 123-residue chain is Small ribosomal subunit protein uS12 (123 aa).

Position 89 is a 3-methylthioaspartic acid (aspartate 89).

It belongs to the universal ribosomal protein uS12 family. As to quaternary structure, part of the 30S ribosomal subunit. Contacts proteins S8 and S17. May interact with IF1 in the 30S initiation complex.

In terms of biological role, with S4 and S5 plays an important role in translational accuracy. Its function is as follows. Interacts with and stabilizes bases of the 16S rRNA that are involved in tRNA selection in the A site and with the mRNA backbone. Located at the interface of the 30S and 50S subunits, it traverses the body of the 30S subunit contacting proteins on the other side and probably holding the rRNA structure together. The combined cluster of proteins S8, S12 and S17 appears to hold together the shoulder and platform of the 30S subunit. This chain is Small ribosomal subunit protein uS12, found in Methylobacterium nodulans (strain LMG 21967 / CNCM I-2342 / ORS 2060).